The chain runs to 30 residues: Neurotoxin II.22.5 (30 aa).

The LCN-type CS-alpha/beta domain occupies 1-30 (KEGYIVNYHTGCKYTCAKLGDNDYCLRECK).

This sequence belongs to the long (4 C-C) scorpion toxin superfamily. Sodium channel inhibitor family. Beta subfamily. In terms of tissue distribution, expressed by the venom gland.

Its subcellular location is the secreted. Functionally, binds to sodium channels (Nav) and inhibits the inactivation of the activated channels, thereby blocking neuronal transmission. The protein is Neurotoxin II.22.5 of Centruroides tecomanus (Scorpion).